A 290-amino-acid chain; its full sequence is Pyridoxal kinase PdxY (290 aa).

S14 contacts substrate. Positions 116 and 153 each coordinate ATP. Position 226 (D226) interacts with substrate.

Belongs to the pyridoxine kinase family. PdxY subfamily. Homodimer. It depends on Mg(2+) as a cofactor.

It catalyses the reaction pyridoxal + ATP = pyridoxal 5'-phosphate + ADP + H(+). It functions in the pathway cofactor metabolism; pyridoxal 5'-phosphate salvage; pyridoxal 5'-phosphate from pyridoxal: step 1/1. In terms of biological role, pyridoxal kinase involved in the salvage pathway of pyridoxal 5'-phosphate (PLP). Catalyzes the phosphorylation of pyridoxal to PLP. The chain is Pyridoxal kinase PdxY from Rubrobacter xylanophilus (strain DSM 9941 / JCM 11954 / NBRC 16129 / PRD-1).